The following is a 135-amino-acid chain: MPRAIFEEDAAQLKLGPEFENEDMLTVSEAKILIETVLAQRARETNGEIPMTDVMKKTVAYFNVFARFKTAEATYACERILGNRFHKFERAQLGTLCCEDAEEARTLIPSLANKIDDQNLQGILDELSTLRKFQD.

Belongs to the eukaryotic RPB4 RNA polymerase subunit family. In terms of assembly, component of the RNA polymerase II (Pol II) complex consisting of 12 subunits. RPB4 and RPB7 form a Pol II subcomplex.

Its subcellular location is the nucleus. In terms of biological role, DNA-dependent RNA polymerase catalyzes the transcription of DNA into RNA using the four ribonucleoside triphosphates as substrates. Component of RNA polymerase II which synthesizes mRNA precursors and many functional non-coding RNAs. Pol II is the central component of the basal RNA polymerase II transcription machinery. It is composed of mobile elements that move relative to each other. RPB4 is part of a subcomplex with RPB7 that binds to a pocket formed by RPB1, RPB2 and RPB6 at the base of the clamp element. The RPB4-RPB7 subcomplex seems to lock the clamp via RPB7 in the closed conformation thus preventing double-stranded DNA to enter the active site cleft. The RPB4-RPB7 subcomplex binds single-stranded DNA and RNA. The protein is DNA-directed RNA polymerase II subunit rpb4 (rpb4) of Schizosaccharomyces pombe (strain 972 / ATCC 24843) (Fission yeast).